The following is a 144-amino-acid chain: uncharacterized protein (144 aa).

Positions 48-119 (ELNKLKAKAD…KETEEPKMEL (72 aa)) form a coiled coil.

This is an uncharacterized protein from Archaeoglobus fulgidus (strain ATCC 49558 / DSM 4304 / JCM 9628 / NBRC 100126 / VC-16).